The primary structure comprises 233 residues: MRIPQHVAIIMDGNGRWAKKRGLPRIKGHQRGAEVLHNTVKWSLELGIKYLTAFSFSTENWKRPKEEVEFLMDLFVQMIDREMELLRRERVRVRILGRKEGLPEKVLKKWQEVEEKTKEFDRMTLIIAFNYGGRREILDAVEFILKDVSHGKKIELTEETFRQYLYLPDVPDPDLIIRTSGEMRLSNFLLWQSAYSELYFFKKLWPDFTKRDFLRAIESYSKRERRFGGLING.

Asp-12 is a catalytic residue. Asp-12 lines the Mg(2+) pocket. Substrate is bound by residues 13 to 16 (GNGR), Trp-17, Arg-25, His-29, and 57 to 59 (STE). The active-site Proton acceptor is the Asn-60. Substrate contacts are provided by residues Trp-61, Arg-63, Arg-178, and 184 to 186 (RLS). Glu-197 contributes to the Mg(2+) binding site.

This sequence belongs to the UPP synthase family. In terms of assembly, homodimer. Requires Mg(2+) as cofactor.

In terms of biological role, catalyzes the condensation of isopentenyl diphosphate (IPP) with allylic pyrophosphates generating different type of terpenoids. This Thermotoga maritima (strain ATCC 43589 / DSM 3109 / JCM 10099 / NBRC 100826 / MSB8) protein is Isoprenyl transferase.